The chain runs to 169 residues: Prolyl-tRNA synthetase associated domain-containing protein 1 (169 aa).

The protein belongs to the PRORSD1 family.

The protein is Prolyl-tRNA synthetase associated domain-containing protein 1 (Prorsd1) of Mus musculus (Mouse).